A 187-amino-acid chain; its full sequence is Endoribonuclease YbeY (187 aa).

Zn(2+) contacts are provided by His-148, His-152, and His-158.

The protein belongs to the endoribonuclease YbeY family. The cofactor is Zn(2+).

Its subcellular location is the cytoplasm. Single strand-specific metallo-endoribonuclease involved in late-stage 70S ribosome quality control and in maturation of the 3' terminus of the 16S rRNA. The sequence is that of Endoribonuclease YbeY from Ralstonia nicotianae (strain ATCC BAA-1114 / GMI1000) (Ralstonia solanacearum).